Reading from the N-terminus, the 702-residue chain is Protein crooked neck (702 aa).

HAT repeat units lie at residues 56 to 88 (DYQQ…WEEQ), 90 to 122 (QEIQ…MEMK), 124 to 156 (KQVN…MEEM), 158 to 189 (ENVA…FELR), 191 to 222 (KEID…FEES), 224 to 259 (GFIH…FEEG), 261 to 295 (KEHD…HEKK), 305 to 337 (VIVS…LIEA), 339 to 373 (GDRD…LWIN), 383 to 419 (EDAE…FEIR), 454 to 486 (REFE…LENL), 488 to 522 (GDTD…FEVA), and 524 to 555 (GETE…FEMG). A Nuclear localization signal motif is present at residues 620 to 628 (PRRIKKRQK). Residues 670–702 (KDNTVDDPPATAIASEPEPAADAAPADTTDSGD) are disordered. Low complexity predominate over residues 683 to 702 (ASEPEPAADAAPADTTDSGD).

It belongs to the crooked-neck family. Colocalizes with a complex containing snRNP proteins. As to expression, transcribed in all cells during embryonic development.

It localises to the nucleus speckle. Functionally, may be involved in pre-mRNA splicing process. Involved in embryonic neurogenesis and cell rearrangement during Malpighian tubule morphogenesis. The polypeptide is Protein crooked neck (crn) (Drosophila melanogaster (Fruit fly)).